We begin with the raw amino-acid sequence, 356 residues long: tRNA N6-adenosine threonylcarbamoyltransferase (356 aa).

Fe cation is bound by residues His-115 and His-119. Residues Leu-138–Gly-142, Asp-171, Gly-184, and Asn-283 contribute to the substrate site. A Fe cation-binding site is contributed by Asp-311.

It belongs to the KAE1 / TsaD family. Requires Fe(2+) as cofactor.

It is found in the cytoplasm. The enzyme catalyses L-threonylcarbamoyladenylate + adenosine(37) in tRNA = N(6)-L-threonylcarbamoyladenosine(37) in tRNA + AMP + H(+). Functionally, required for the formation of a threonylcarbamoyl group on adenosine at position 37 (t(6)A37) in tRNAs that read codons beginning with adenine. Is involved in the transfer of the threonylcarbamoyl moiety of threonylcarbamoyl-AMP (TC-AMP) to the N6 group of A37, together with TsaE and TsaB. TsaD likely plays a direct catalytic role in this reaction. The polypeptide is tRNA N6-adenosine threonylcarbamoyltransferase (Prochlorococcus marinus (strain MIT 9303)).